Consider the following 132-residue polypeptide: Small ribosomal subunit protein uS8 (132 aa).

Belongs to the universal ribosomal protein uS8 family. Part of the 30S ribosomal subunit. Contacts proteins S5 and S12.

Its function is as follows. One of the primary rRNA binding proteins, it binds directly to 16S rRNA central domain where it helps coordinate assembly of the platform of the 30S subunit. In Listeria innocua serovar 6a (strain ATCC BAA-680 / CLIP 11262), this protein is Small ribosomal subunit protein uS8.